The following is a 357-amino-acid chain: Isoflavone 7-O-methyltransferase (357 aa).

S-adenosyl-L-methionine contacts are provided by residues 200-203 (VGGG), Asp224, 224-225 (DR), 244-245 (DM), and Lys258. The active-site Proton acceptor is His262.

It belongs to the class I-like SAM-binding methyltransferase superfamily. Cation-independent O-methyltransferase family. COMT subfamily.

It catalyses the reaction a 7-hydroxyisoflavone + S-adenosyl-L-methionine = a 7-methoxyisoflavone + S-adenosyl-L-homocysteine + H(+). 7-O-methyltransferase involved in the biosynthesis of isoformononetin. Can use daidzein as substrate, but not medicarpin or 2,7,4'-trihydroxyisoflavanone. This Glycyrrhiza echinata (Licorice) protein is Isoflavone 7-O-methyltransferase (D7OMT).